The sequence spans 369 residues: Methylthioribose-1-phosphate isomerase (369 aa).

Residues 54-56 (RGA), Arg-95, and Gln-208 contribute to the substrate site. Asp-249 functions as the Proton donor in the catalytic mechanism. 259–260 (NK) is a binding site for substrate.

It belongs to the eIF-2B alpha/beta/delta subunits family. MtnA subfamily.

It carries out the reaction 5-(methylsulfanyl)-alpha-D-ribose 1-phosphate = 5-(methylsulfanyl)-D-ribulose 1-phosphate. The protein operates within amino-acid biosynthesis; L-methionine biosynthesis via salvage pathway; L-methionine from S-methyl-5-thio-alpha-D-ribose 1-phosphate: step 1/6. Its function is as follows. Catalyzes the interconversion of methylthioribose-1-phosphate (MTR-1-P) into methylthioribulose-1-phosphate (MTRu-1-P). This is Methylthioribose-1-phosphate isomerase from Desulfosudis oleivorans (strain DSM 6200 / JCM 39069 / Hxd3) (Desulfococcus oleovorans).